Here is a 412-residue protein sequence, read N- to C-terminus: Acyl-[acyl-carrier-protein] hydrolase FATB3, chloroplastic (412 aa).

The segment covering 1 to 25 has biased composition (low complexity); sequence MVAAAASSAFFSFPTPGTSPKPGKF. A chloroplast-targeting transit peptide spans 1–50; the sequence is MVAAAASSAFFSFPTPGTSPKPGKFGNWPSSLSIPFNPKSNHNGGIQVKA. Positions 1–63 are disordered; that stretch reads MVAAAASSAF…AHPKANGSAV (63 aa). Over residues 28 to 44 the composition is skewed to polar residues; sequence WPSSLSIPFNPKSNHNG. Catalysis depends on residues Asn310, His312, and Cys347. The tract at residues 393–412 is disordered; the sequence is NAGATGAVSTGKTSNGNSVS. Residues 399 to 412 are compositionally biased toward polar residues; the sequence is AVSTGKTSNGNSVS.

The protein belongs to the acyl-ACP thioesterase family.

It localises to the plastid. Its subcellular location is the chloroplast. The enzyme catalyses tetradecanoyl-[ACP] + H2O = tetradecanoate + holo-[ACP] + H(+). In terms of biological role, plays an essential role in chain termination during de novo fatty acid synthesis. Possesses thioesterase activity for medium chain acyl-ACPs. Main substrate is 14:0. The protein is Acyl-[acyl-carrier-protein] hydrolase FATB3, chloroplastic of Cuphea viscosissima (Blue waxweed).